We begin with the raw amino-acid sequence, 587 residues long: Arginine--tRNA ligase (587 aa).

The short motif at 123 to 133 (ANVAKPLHVGH) is the 'HIGH' region element.

This sequence belongs to the class-I aminoacyl-tRNA synthetase family. In terms of assembly, monomer.

It localises to the cytoplasm. It carries out the reaction tRNA(Arg) + L-arginine + ATP = L-arginyl-tRNA(Arg) + AMP + diphosphate. In Alkaliphilus oremlandii (strain OhILAs) (Clostridium oremlandii (strain OhILAs)), this protein is Arginine--tRNA ligase.